Consider the following 149-residue polypeptide: D-aminoacyl-tRNA deacylase (149 aa).

Positions 137 to 138 (GP) match the Gly-cisPro motif, important for rejection of L-amino acids motif.

It belongs to the DTD family. Homodimer.

It is found in the cytoplasm. The catalysed reaction is glycyl-tRNA(Ala) + H2O = tRNA(Ala) + glycine + H(+). The enzyme catalyses a D-aminoacyl-tRNA + H2O = a tRNA + a D-alpha-amino acid + H(+). Functionally, an aminoacyl-tRNA editing enzyme that deacylates mischarged D-aminoacyl-tRNAs. Also deacylates mischarged glycyl-tRNA(Ala), protecting cells against glycine mischarging by AlaRS. Acts via tRNA-based rather than protein-based catalysis; rejects L-amino acids rather than detecting D-amino acids in the active site. By recycling D-aminoacyl-tRNA to D-amino acids and free tRNA molecules, this enzyme counteracts the toxicity associated with the formation of D-aminoacyl-tRNA entities in vivo and helps enforce protein L-homochirality. The polypeptide is D-aminoacyl-tRNA deacylase (Pediococcus pentosaceus (strain ATCC 25745 / CCUG 21536 / LMG 10740 / 183-1w)).